Here is a 113-residue protein sequence, read N- to C-terminus: uncharacterized protein (113 aa).

The disordered stretch occupies residues 28-55 (CDGGPRRPLSRRGEEARRARAPSYEEQE).

This is an uncharacterized protein from Human cytomegalovirus (strain AD169) (HHV-5).